A 488-amino-acid polypeptide reads, in one-letter code: Serine protease HTR4 (488 aa).

An N-terminal signal peptide occupies residues 1 to 35 (MSRSKMSSQRLWAVRAQFLLLWLLLWAAPVPWAEA). The region spanning 40–118 (VSLPCPDACD…RAWLGTCGCA (79 aa)) is the IGFBP N-terminal domain. Disulfide bonds link Cys44-Cys70, Cys48-Cys72, Cys53-Cys73, Cys59-Cys76, Cys84-Cys98, and Cys92-Cys115. The segment at 213-373 (GSGFIVSEDG…IPSDRIRQFL (161 aa)) is serine protease. Catalysis depends on charge relay system residues His229, Asp259, and Ser337. Residues 384-476 (KAPLQKKYLG…LSIIVLRGSQ (93 aa)) form the PDZ domain.

The protein belongs to the peptidase S1C family.

It localises to the secreted. Its function is as follows. Serine protease. This Rattus norvegicus (Rat) protein is Serine protease HTR4 (Htra4).